Consider the following 149-residue polypeptide: Calmodulin (149 aa).

An N-acetylalanine modification is found at Ala-2. EF-hand domains follow at residues 8–43, 44–79, 81–116, and 117–149; these read EQIA…LGQN, PTEA…KMKD, DSEE…LGEK, and LTDE…MMAK. The Ca(2+) site is built by Asp-21, Asp-23, Asp-25, Thr-27, Glu-32, Asp-57, Asp-59, Asn-61, Thr-63, Glu-68, Asp-94, Asp-96, Asn-98, and Glu-105. Lys-116 is modified (N6,N6,N6-trimethyllysine). The Ca(2+) site is built by Asp-130, Asp-132, Asp-134, Gln-136, and Glu-141.

Belongs to the calmodulin family.

Its function is as follows. Calmodulin mediates the control of a large number of enzymes, ion channels and other proteins by Ca(2+). Among the enzymes to be stimulated by the calmodulin-Ca(2+) complex are a number of protein kinases and phosphatases. The protein is Calmodulin of Macrocystis pyrifera (Giant kelp).